We begin with the raw amino-acid sequence, 568 residues long: Sulfite reductase [NADPH] hemoprotein beta-component (568 aa).

Residues C425, C431, C470, and C474 each contribute to the [4Fe-4S] cluster site. C474 is a siroheme binding site.

Belongs to the nitrite and sulfite reductase 4Fe-4S domain family. In terms of assembly, alpha(8)-beta(8). The alpha component is a flavoprotein, the beta component is a hemoprotein. The cofactor is siroheme. It depends on [4Fe-4S] cluster as a cofactor.

It catalyses the reaction hydrogen sulfide + 3 NADP(+) + 3 H2O = sulfite + 3 NADPH + 4 H(+). Its pathway is sulfur metabolism; hydrogen sulfide biosynthesis; hydrogen sulfide from sulfite (NADPH route): step 1/1. In terms of biological role, component of the sulfite reductase complex that catalyzes the 6-electron reduction of sulfite to sulfide. This is one of several activities required for the biosynthesis of L-cysteine from sulfate. The chain is Sulfite reductase [NADPH] hemoprotein beta-component from Xanthomonas euvesicatoria pv. vesicatoria (strain 85-10) (Xanthomonas campestris pv. vesicatoria).